Reading from the N-terminus, the 197-residue chain is MTDQKLAKAKVIFVLGGPGSGKGTQCEKLVQKFHFNHLSSGDLLRAEVQSGSPKGKELKAMMERGELVPLEVVLALLKEAMINWLTKIVISLSIRYPRELDQGIKFEKEVCPCLCVINFDVSEEVMRKRLLKRAETSNRVDDNEETIVKRFRTFNELTKPVIEHYKQQNKVITIDASGTVDAIFDKVNHELQKFGVK.

Residue G19–T24 participates in ATP binding. The interval S39–V68 is NMP. Residues S40, R45, E66–V68, R95–R98, and Q102 each bind AMP. Positions K132 to D142 are LID. An ATP-binding site is contributed by R133. Residues R139 and R150 each coordinate AMP. ATP is bound at residue G178.

Belongs to the adenylate kinase family. As to quaternary structure, monomer.

Its subcellular location is the cytoplasm. It catalyses the reaction AMP + ATP = 2 ADP. Catalyzes the reversible transfer of the terminal phosphate group between ATP and AMP. Plays an important role in cellular energy homeostasis and in adenine nucleotide metabolism. The protein is Adenylate kinase of Schistosoma mansoni (Blood fluke).